A 401-amino-acid chain; its full sequence is uncharacterized protein (401 aa).

The protein belongs to the herpesviridae BTRF1 family.

This is an uncharacterized protein from Connochaetes taurinus (Blue wildebeest).